The primary structure comprises 273 residues: Dermonecrotic toxin LdSicTox-alphaIB1aiv (273 aa).

His5 is a catalytic residue. Residues Glu25 and Asp27 each coordinate Mg(2+). The Nucleophile role is filled by His41. 2 cysteine pairs are disulfide-bonded: Cys45–Cys51 and Cys47–Cys190. Position 85 (Asp85) interacts with Mg(2+). Residue Asn250 is glycosylated (N-linked (GlcNAc...) asparagine).

Belongs to the arthropod phospholipase D family. Class II subfamily. Mg(2+) is required as a cofactor. In terms of tissue distribution, expressed by the venom gland.

Its subcellular location is the secreted. It catalyses the reaction an N-(acyl)-sphingosylphosphocholine = an N-(acyl)-sphingosyl-1,3-cyclic phosphate + choline. The catalysed reaction is an N-(acyl)-sphingosylphosphoethanolamine = an N-(acyl)-sphingosyl-1,3-cyclic phosphate + ethanolamine. The enzyme catalyses a 1-acyl-sn-glycero-3-phosphocholine = a 1-acyl-sn-glycero-2,3-cyclic phosphate + choline. It carries out the reaction a 1-acyl-sn-glycero-3-phosphoethanolamine = a 1-acyl-sn-glycero-2,3-cyclic phosphate + ethanolamine. Functionally, dermonecrotic toxins cleave the phosphodiester linkage between the phosphate and headgroup of certain phospholipids (sphingolipid and lysolipid substrates), forming an alcohol (often choline) and a cyclic phosphate. This toxin acts on sphingomyelin (SM). It may also act on ceramide phosphoethanolamine (CPE), lysophosphatidylcholine (LPC) and lysophosphatidylethanolamine (LPE), but not on lysophosphatidylserine (LPS), and lysophosphatidylglycerol (LPG). It acts by transphosphatidylation, releasing exclusively cyclic phosphate products as second products. Induces dermonecrosis, hemolysis, increased vascular permeability, edema, inflammatory response, and platelet aggregation. The chain is Dermonecrotic toxin LdSicTox-alphaIB1aiv from Loxosceles deserta (Desert recluse spider).